A 167-amino-acid polypeptide reads, in one-letter code: D-aminoacyl-tRNA deacylase 2 (167 aa).

The short motif at 159–160 (GP) is the Gly-transPro motif, allows the protein to recognize chirality of D-amino acids element.

This sequence belongs to the DTD family. As to quaternary structure, homodimer.

The protein localises to the cytoplasm. It carries out the reaction a D-aminoacyl-tRNA + H2O = a tRNA + a D-alpha-amino acid + H(+). The enzyme catalyses glycyl-tRNA(Ala) + H2O = tRNA(Ala) + glycine + H(+). The catalysed reaction is D-tyrosyl-tRNA(Tyr) + H2O = D-tyrosine + tRNA(Tyr). It catalyses the reaction L-alanyl-tRNA(Thr) + H2O = tRNA(Thr) + L-alanine + H(+). Deacylates mischarged D-aminoacyl-tRNAs. Also deacylates mischarged glycyl-tRNA(Ala), protecting cells against glycine mischarging by AlaRS. Probably acts by rejecting L-amino acids from its binding site rather than specific recognition of D-amino acids. Catalyzes the hydrolysis of D-tyrosyl-tRNA(Tyr), has no activity on correctly charged L-tyrosyl-tRNA(Tyr). By recycling D-aminoacyl-tRNA to D-amino acids and free tRNA molecules, this enzyme counteracts the toxicity associated with the formation of D-aminoacyl-tRNA entities in vivo and helps enforce protein L-homochirality. In contrast to DTD1, deacylates L-Ala mischarged on tRNA(Thr)(G4.U69) by alanine-tRNA ligase AARS. Can deacylate L-Ala due to a relaxed specificity for substrate chirality caused by the trans conformation of the Gly-Pro motif in the active site. Also hydrolyzes correctly charged, achiral, glycyl-tRNA(Gly) in vitro, although in vivo EEF1A1/EF-Tu may protect cognate achiral glycyl-tRNA(Gly) from DTD2-mediated deacetylation. In Gallus gallus (Chicken), this protein is D-aminoacyl-tRNA deacylase 2 (DTD2).